The following is a 204-amino-acid chain: UPF0637 protein SAB0972c (204 aa).

Belongs to the UPF0637 family.

The polypeptide is UPF0637 protein SAB0972c (Staphylococcus aureus (strain bovine RF122 / ET3-1)).